Here is a 284-residue protein sequence, read N- to C-terminus: T-cell leukemia homeobox protein 2 (284 aa).

3 disordered regions span residues 1-50 (MEPG…NGAF), 78-106 (GGVI…GPSG), and 139-166 (FSGT…SFSR). Positions 30–50 (TPGGGLGLGRGGQGHGENGAF) are enriched in gly residues. The span at 87–96 (RPLPVPPPAG) shows a compositional bias: pro residues. Residues 157 to 216 (RKKPRTSFSRSQVLELERRFLRQKYLASAERAALAKALRMTDAQVKTWFQNRRTKWRRQT) constitute a DNA-binding region (homeobox).

The protein resides in the nucleus. Functionally, transcription activator that binds DNA elements with the consensus sequence 5'-CGGTAATTGG-3'. Binds DNA via its homeobox. Required for normal cell death of enteric neurons in the gastrointestinal tract. Required for normal development of the enteric nervous system, and for proper development of normal motility of the gastrointestinal tract. The polypeptide is T-cell leukemia homeobox protein 2 (TLX2) (Homo sapiens (Human)).